Consider the following 93-residue polypeptide: Stage III sporulation protein D (93 aa).

In terms of domain architecture, HTH deoR-type spans 4–75; that stretch reads YIKERTIKIG…IRHLRGGEAT (72 aa). A DNA-binding region (H-T-H motif) is located at residues 21-40; sequence KTVRVIAKEFGVSKSTVHKD.

In terms of biological role, this protein regulates the transcription of sigK, which encodes mother cell chamber RNA polymerase sigma-factor (sigma K). This Bacillus subtilis (strain 168) protein is Stage III sporulation protein D (spoIIID).